Reading from the N-terminus, the 278-residue chain is Elongation factor Ts 2, mitochondrial (278 aa).

It belongs to the EF-Ts family.

It localises to the mitochondrion. Its function is as follows. Associates with the EF-Tu.GDP complex and induces the exchange of GDP to GTP. It remains bound to the aminoacyl-tRNA.EF-Tu.GTP complex up to the GTP hydrolysis stage on the ribosome. This is Elongation factor Ts 2, mitochondrial from Trypanosoma cruzi (strain CL Brener).